The following is a 102-amino-acid chain: Small ribosomal subunit protein uS10 (102 aa).

The protein belongs to the universal ribosomal protein uS10 family. As to quaternary structure, part of the 30S ribosomal subunit.

In terms of biological role, involved in the binding of tRNA to the ribosomes. The chain is Small ribosomal subunit protein uS10 from Acidiphilium cryptum (strain JF-5).